We begin with the raw amino-acid sequence, 218 residues long: Pyridoxine/pyridoxamine 5'-phosphate oxidase (218 aa).

Residues 14-17 and Lys-72 each bind substrate; that span reads RREY. FMN is bound by residues 67–72, 82–83, Arg-88, Lys-89, and Gln-111; these read RIVLLK and YT. 3 residues coordinate substrate: Tyr-129, Arg-133, and Ser-137. FMN contacts are provided by residues 146-147 and Trp-191; that span reads QS. 197-199 lines the substrate pocket; that stretch reads RLH. Residue Arg-201 coordinates FMN.

It belongs to the pyridoxamine 5'-phosphate oxidase family. In terms of assembly, homodimer. FMN is required as a cofactor.

The enzyme catalyses pyridoxamine 5'-phosphate + O2 + H2O = pyridoxal 5'-phosphate + H2O2 + NH4(+). It carries out the reaction pyridoxine 5'-phosphate + O2 = pyridoxal 5'-phosphate + H2O2. It functions in the pathway cofactor metabolism; pyridoxal 5'-phosphate salvage; pyridoxal 5'-phosphate from pyridoxamine 5'-phosphate: step 1/1. The protein operates within cofactor metabolism; pyridoxal 5'-phosphate salvage; pyridoxal 5'-phosphate from pyridoxine 5'-phosphate: step 1/1. Catalyzes the oxidation of either pyridoxine 5'-phosphate (PNP) or pyridoxamine 5'-phosphate (PMP) into pyridoxal 5'-phosphate (PLP). This is Pyridoxine/pyridoxamine 5'-phosphate oxidase from Escherichia coli O45:K1 (strain S88 / ExPEC).